The chain runs to 277 residues: 4-hydroxy-tetrahydrodipicolinate reductase (277 aa).

NAD(+) contacts are provided by residues 11–16 and 110–112; these read GALGRM and GTT. The Proton donor/acceptor role is filled by His166. Position 167 (His167) interacts with (S)-2,3,4,5-tetrahydrodipicolinate. Lys170 acts as the Proton donor in catalysis. 176-177 serves as a coordination point for (S)-2,3,4,5-tetrahydrodipicolinate; sequence GT.

It belongs to the DapB family.

Its subcellular location is the cytoplasm. It carries out the reaction (S)-2,3,4,5-tetrahydrodipicolinate + NAD(+) + H2O = (2S,4S)-4-hydroxy-2,3,4,5-tetrahydrodipicolinate + NADH + H(+). The enzyme catalyses (S)-2,3,4,5-tetrahydrodipicolinate + NADP(+) + H2O = (2S,4S)-4-hydroxy-2,3,4,5-tetrahydrodipicolinate + NADPH + H(+). It participates in amino-acid biosynthesis; L-lysine biosynthesis via DAP pathway; (S)-tetrahydrodipicolinate from L-aspartate: step 4/4. Functionally, catalyzes the conversion of 4-hydroxy-tetrahydrodipicolinate (HTPA) to tetrahydrodipicolinate. In Synechococcus sp. (strain CC9902), this protein is 4-hydroxy-tetrahydrodipicolinate reductase.